The following is a 447-amino-acid chain: Ribosomal protein uS12 methylthiotransferase RimO (447 aa).

The MTTase N-terminal domain occupies Pro-4 to Pro-114. Residues Cys-13, Cys-49, Cys-78, Cys-147, Cys-151, and Cys-154 each contribute to the [4Fe-4S] cluster site. A Radical SAM core domain is found at Leu-133 to Ala-370. The 71-residue stretch at Gln-373 to Lys-443 folds into the TRAM domain.

The protein belongs to the methylthiotransferase family. RimO subfamily. [4Fe-4S] cluster serves as cofactor.

The protein localises to the cytoplasm. The enzyme catalyses L-aspartate(89)-[ribosomal protein uS12]-hydrogen + (sulfur carrier)-SH + AH2 + 2 S-adenosyl-L-methionine = 3-methylsulfanyl-L-aspartate(89)-[ribosomal protein uS12]-hydrogen + (sulfur carrier)-H + 5'-deoxyadenosine + L-methionine + A + S-adenosyl-L-homocysteine + 2 H(+). In terms of biological role, catalyzes the methylthiolation of an aspartic acid residue of ribosomal protein uS12. The chain is Ribosomal protein uS12 methylthiotransferase RimO from Acinetobacter baumannii (strain SDF).